The sequence spans 558 residues: 2-isopropylmalate synthase (558 aa).

The Pyruvate carboxyltransferase domain occupies 31 to 305 (PRWCSTDLRD…YPNLDFSDMR (275 aa)). Residues aspartate 40, histidine 244, histidine 246, and asparagine 280 each coordinate Mg(2+). The regulatory domain stretch occupies residues 439–558 (NPDDKGQMKL…NACHPLYKEA (120 aa)).

The protein belongs to the alpha-IPM synthase/homocitrate synthase family. LeuA type 2 subfamily. In terms of assembly, homodimer. The cofactor is Mg(2+).

It is found in the cytoplasm. The enzyme catalyses 3-methyl-2-oxobutanoate + acetyl-CoA + H2O = (2S)-2-isopropylmalate + CoA + H(+). It participates in amino-acid biosynthesis; L-leucine biosynthesis; L-leucine from 3-methyl-2-oxobutanoate: step 1/4. Catalyzes the condensation of the acetyl group of acetyl-CoA with 3-methyl-2-oxobutanoate (2-ketoisovalerate) to form 3-carboxy-3-hydroxy-4-methylpentanoate (2-isopropylmalate). This chain is 2-isopropylmalate synthase, found in Marinomonas sp. (strain MWYL1).